Reading from the N-terminus, the 161-residue chain is 2-C-methyl-D-erythritol 2,4-cyclodiphosphate synthase (161 aa).

D10 and H12 together coordinate a divalent metal cation. Residues 10–12 (DVH) and 36–37 (HS) contribute to the 4-CDP-2-C-methyl-D-erythritol 2-phosphate site. H44 is an a divalent metal cation binding site. Residues 58–60 (DIG), 134–137 (TTTE), F141, and R144 contribute to the 4-CDP-2-C-methyl-D-erythritol 2-phosphate site.

The protein belongs to the IspF family. Homotrimer. Requires a divalent metal cation as cofactor.

The catalysed reaction is 4-CDP-2-C-methyl-D-erythritol 2-phosphate = 2-C-methyl-D-erythritol 2,4-cyclic diphosphate + CMP. The protein operates within isoprenoid biosynthesis; isopentenyl diphosphate biosynthesis via DXP pathway; isopentenyl diphosphate from 1-deoxy-D-xylulose 5-phosphate: step 4/6. Functionally, involved in the biosynthesis of isopentenyl diphosphate (IPP) and dimethylallyl diphosphate (DMAPP), two major building blocks of isoprenoid compounds. Catalyzes the conversion of 4-diphosphocytidyl-2-C-methyl-D-erythritol 2-phosphate (CDP-ME2P) to 2-C-methyl-D-erythritol 2,4-cyclodiphosphate (ME-CPP) with a corresponding release of cytidine 5-monophosphate (CMP). This is 2-C-methyl-D-erythritol 2,4-cyclodiphosphate synthase from Parabacteroides distasonis (strain ATCC 8503 / DSM 20701 / CIP 104284 / JCM 5825 / NCTC 11152).